Reading from the N-terminus, the 185-residue chain is Kunitz-type serine protease inhibitor DrTI (185 aa).

2 disulfides stabilise this stretch: Cys-44-Cys-89 and Cys-139-Cys-147.

The protein belongs to the protease inhibitor I3 (leguminous Kunitz-type inhibitor) family.

The protein resides in the secreted. In terms of biological role, inhibits bovine trypsin and human plasma kallikrein. This is Kunitz-type serine protease inhibitor DrTI from Delonix regia (Royal poinciana).